Consider the following 588-residue polypeptide: L-fucose isomerase (588 aa).

Catalysis depends on proton acceptor residues Glu-335 and Asp-359. 3 residues coordinate Mn(2+): Glu-335, Asp-359, and His-525.

It belongs to the L-fucose isomerase family. Mn(2+) serves as cofactor.

It is found in the cytoplasm. It carries out the reaction L-fucose = L-fuculose. The protein operates within carbohydrate degradation; L-fucose degradation; L-lactaldehyde and glycerone phosphate from L-fucose: step 1/3. Functionally, converts the aldose L-fucose into the corresponding ketose L-fuculose. The polypeptide is L-fucose isomerase (Streptococcus pneumoniae (strain Hungary19A-6)).